Consider the following 579-residue polypeptide: Alpha-longipinene synthase (579 aa).

Mg(2+)-binding residues include aspartate 332, aspartate 336, aspartate 476, and asparagine 484. The DDXXD motif motif lies at 332–336 (DDLYD).

This sequence belongs to the terpene synthase family. Tpsd subfamily. The cofactor is Mg(2+). Requires Mn(2+) as cofactor.

It carries out the reaction (2E,6E)-farnesyl diphosphate = alpha-longipinene + diphosphate. It functions in the pathway sesquiterpene biosynthesis. It participates in terpene metabolism; oleoresin biosynthesis. In terms of biological role, terpene synthase (TPS) involved in the biosynthesis of sesquiterpene natural products included in conifer oleoresin secretions and volatile emissions; these compounds contribute to biotic and abiotic stress defense against herbivores and pathogens. Catalyzes the conversion of (2E,6E)-farnesyl diphosphate (FPP) to alpha-longipinene. This is Alpha-longipinene synthase from Picea sitchensis (Sitka spruce).